The primary structure comprises 74 residues: EMBRYO SURROUNDING FACTOR 1-like protein 4 (74 aa).

Positions 1-22 (MKSSHAYLVCILLLSLFSLHQC) are cleaved as a signal peptide. 4 disulfides stabilise this stretch: cysteine 36–cysteine 51, cysteine 41–cysteine 70, cysteine 49–cysteine 66, and cysteine 52–cysteine 59.

Belongs to the MEG family. Expressed in flowers.

The protein is EMBRYO SURROUNDING FACTOR 1-like protein 4 (ESFL4) of Arabidopsis thaliana (Mouse-ear cress).